Here is a 137-residue protein sequence, read N- to C-terminus: Keratin-associated protein 15-1 (137 aa).

The protein belongs to the PMG family. In terms of assembly, interacts with hair keratins.

Its function is as follows. In the hair cortex, hair keratin intermediate filaments are embedded in an interfilamentous matrix, consisting of hair keratin-associated proteins (KRTAP), which are essential for the formation of a rigid and resistant hair shaft through their extensive disulfide bond cross-linking with abundant cysteine residues of hair keratins. The matrix proteins include the high-sulfur and high-glycine-tyrosine keratins. The protein is Keratin-associated protein 15-1 (KRTAP15-1) of Homo sapiens (Human).